A 253-amino-acid polypeptide reads, in one-letter code: 5-oxoprolinase subunit A (253 aa).

Belongs to the LamB/PxpA family. Forms a complex composed of PxpA, PxpB and PxpC.

It catalyses the reaction 5-oxo-L-proline + ATP + 2 H2O = L-glutamate + ADP + phosphate + H(+). In terms of biological role, catalyzes the cleavage of 5-oxoproline to form L-glutamate coupled to the hydrolysis of ATP to ADP and inorganic phosphate. This Bacillus cereus (strain ZK / E33L) protein is 5-oxoprolinase subunit A.